The sequence spans 194 residues: Protein LURP-one-related 10 (194 aa).

This sequence belongs to the LOR family.

Its function is as follows. Might be related to the phospholipid scramblase and tubby-like superfamily of membrane tethered transcription factors. This Arabidopsis thaliana (Mouse-ear cress) protein is Protein LURP-one-related 10.